A 433-amino-acid chain; its full sequence is FAD-dependent monooxygenase notI (433 aa).

Residues glutamate 45 and arginine 117 each coordinate FAD. Residue arginine 195 is part of the active site. The FAD site is built by aspartate 314 and alanine 327.

Belongs to the paxM FAD-dependent monooxygenase family. It depends on FAD as a cofactor.

It participates in alkaloid biosynthesis. Functionally, FAD-dependent monooxygenase; part of the gene cluster that mediates the biosynthesis of notoamide, a fungal indole alkaloid that belongs to a family of natural products containing a characteristic bicyclo[2.2.2]diazaoctane core. The first step of notoamide biosynthesis involves coupling of L-proline and L-tryptophan by the bimodular NRPS notE, to produce cyclo-L-tryptophan-L-proline called brevianamide F. The reverse prenyltransferase notF then acts as a deoxybrevianamide E synthase and converts brevianamide F to deoxybrevianamide E via reverse prenylation at C-2 of the indole ring leading to the bicyclo[2.2.2]diazaoctane core. Deoxybrevianamide E is further hydroxylated at C-6 of the indole ring, likely catalyzed by the cytochrome P450 monooxygenase notG, to yield 6-hydroxy-deoxybrevianamide E. 6-hydroxy-deoxybrevianamide E is a specific substrate of the prenyltransferase notC for normal prenylation at C-7 to produce 6-hydroxy-7-prenyl-deoxybrevianamide, also called notoamide S. As the proposed pivotal branching point in notoamide biosynthesis, notoamide S can be diverted to notoamide E through an oxidative pyran ring closure putatively catalyzed by either notH cytochrome P450 monooxygenase or the notD FAD-linked oxidoreductase. This step would be followed by an indole 2,3-epoxidation-initiated pinacol-like rearrangement catalyzed by the notB FAD-dependent monooxygenase leading to the formation of notoamide C and notoamide D. On the other hand notoamide S is converted to notoamide T by notH (or notD), a bifunctional oxidase that also functions as the intramolecular Diels-Alderase responsible for generation of (+)-notoamide T. To generate antipodal (-)-notoaminide T, notH' (or notD') in Aspergillus versicolor is expected to catalyze a Diels-Alder reaction leading to the opposite stereochemistry. The remaining oxidoreductase notD (or notH) likely catalyzes the oxidative pyran ring formation to yield (+)-stephacidin A. The FAD-dependent monooxygenase notI is highly similar to notB and is predicted to catalyze a similar conversion from (+)-stephacidin A to (-)-notoamide B via the 2,3-epoxidation of (+)-stephacidin A followed by a pinacol-type rearrangement. Finally, it remains unclear which enzyme could be responsible for the final hydroxylation steps leading to notoamide A and sclerotiamide. The sequence is that of FAD-dependent monooxygenase notI from Aspergillus sp. (strain MF297-2).